Here is a 243-residue protein sequence, read N- to C-terminus: Triosephosphate isomerase (243 aa).

Asparagine 9 to lysine 11 contributes to the substrate binding site. Histidine 96 functions as the Electrophile in the catalytic mechanism. The active-site Proton acceptor is glutamate 165. Residues glycine 171, serine 204, and glycine 225–glycine 226 each bind substrate.

It belongs to the triosephosphate isomerase family. Homodimer.

The protein localises to the cytoplasm. The catalysed reaction is D-glyceraldehyde 3-phosphate = dihydroxyacetone phosphate. It participates in carbohydrate biosynthesis; gluconeogenesis. Its pathway is carbohydrate degradation; glycolysis; D-glyceraldehyde 3-phosphate from glycerone phosphate: step 1/1. Functionally, involved in the gluconeogenesis. Catalyzes stereospecifically the conversion of dihydroxyacetone phosphate (DHAP) to D-glyceraldehyde-3-phosphate (G3P). This is Triosephosphate isomerase from Synechococcus sp. (strain WH7803).